The sequence spans 252 residues: 3-dehydroquinate dehydratase (252 aa).

3-dehydroquinate is bound by residues Ser21, 46 to 48, and Arg82; that span reads EWR. The Proton donor/acceptor role is filled by His143. The active-site Schiff-base intermediate with substrate is Lys170. Positions 213, 232, and 236 each coordinate 3-dehydroquinate.

Belongs to the type-I 3-dehydroquinase family. In terms of assembly, homodimer.

The catalysed reaction is 3-dehydroquinate = 3-dehydroshikimate + H2O. It participates in metabolic intermediate biosynthesis; chorismate biosynthesis; chorismate from D-erythrose 4-phosphate and phosphoenolpyruvate: step 3/7. Involved in the third step of the chorismate pathway, which leads to the biosynthesis of aromatic amino acids. Catalyzes the cis-dehydration of 3-dehydroquinate (DHQ) and introduces the first double bond of the aromatic ring to yield 3-dehydroshikimate. The chain is 3-dehydroquinate dehydratase from Escherichia coli O157:H7.